Consider the following 1259-residue polypeptide: Neural cell adhesion molecule L1 (1259 aa).

The first 19 residues, 1 to 19 (MVMMLWYVLPLLLCSPCLL), serve as a signal peptide directing secretion. At 20 to 1122 (IQIPDEYKGH…VSTTGSFASE (1103 aa)) the chain is on the extracellular side. Ig-like C2-type domains follow at residues 35 to 128 (PVIT…HEIQ), 138 to 225 (PKET…EPID), 239 to 327 (PRLL…YYVT), 332 to 419 (PYWL…AYIY), 424 to 506 (PARI…NNVT), and 517 to 600 (TQIT…DEVE). Cystine bridges form between cysteine 57/cysteine 113 and cysteine 157/cysteine 208. N-linked (GlcNAc...) asparagine glycosylation is found at asparagine 100, asparagine 202, asparagine 246, and asparagine 293. Intrachain disulfides connect cysteine 263–cysteine 311 and cysteine 353–cysteine 403. Residues asparagine 432, asparagine 489, and asparagine 504 are each glycosylated (N-linked (GlcNAc...) asparagine). Cysteines 447 and 496 form a disulfide. The cysteines at positions 538 and 590 are disulfide-linked. 2 short sequence motifs (cell attachment site) span residues 553 to 555 (RGD) and 562 to 564 (RGD). Fibronectin type-III domains are found at residues 613–711 (PVPH…TPEA), 716–809 (NPVD…SGED), 811–916 (PQVS…PEGV), 919–1014 (HPEA…MALF), and 1016–1116 (KPDF…VSTT). A glycan (N-linked (GlcNAc...) asparagine) is linked at asparagine 670. The tract at residues 697-724 (GEPSPVSETVVTPEAAPEKNPVDVRGEG) is disordered. The span at 712 to 724 (APEKNPVDVRGEG) shows a compositional bias: basic and acidic residues. Residues asparagine 725, asparagine 776, asparagine 824, asparagine 848, asparagine 875, asparagine 968, asparagine 978, asparagine 1021, asparagine 1029, asparagine 1072, and asparagine 1106 are each glycosylated (N-linked (GlcNAc...) asparagine). The chain crosses the membrane as a helical span at residues 1123–1145 (GWFIAFVSAIILLLLILLILCFI). At 1146–1259 (KRSKGGKYSV…SPINPAVALE (114 aa)) the chain is on the cytoplasmic side. A phosphoserine mark is found at serine 1165, arginine 1179, serine 1180, serine 1183, serine 1196, serine 1245, serine 1246, and serine 1250. Disordered regions lie at residues 1182–1209 (ESDNEEKAFGSSQPSLNGDIKPLGSDDS) and 1228–1259 (IGQYSGKKEKEAAGGNDSSGATSPINPAVALE). Residues 1243–1252 (NDSSGATSPI) show a composition bias toward polar residues.

The protein belongs to the immunoglobulin superfamily. L1/neurofascin/NgCAM family. Interacts with SHTN1; the interaction occurs in axonal growth cones. Interacts with isoform 2 of BSG. Isoform 2 is predominantly found in the brain, while isoform 1 is found in the peripheral nervous system.

The protein localises to the cell membrane. Its subcellular location is the cell projection. It localises to the growth cone. In terms of biological role, neural cell adhesion molecule involved in the dynamics of cell adhesion and in the generation of transmembrane signals at tyrosine kinase receptors. During brain development, critical in multiple processes, including neuronal migration, axonal growth and fasciculation, and synaptogenesis. In the mature brain, plays a role in the dynamics of neuronal structure and function, including synaptic plasticity. This is Neural cell adhesion molecule L1 (L1cam) from Rattus norvegicus (Rat).